A 196-amino-acid polypeptide reads, in one-letter code: Ribosome maturation factor RimP (196 aa).

The disordered stretch occupies residues E176–Q196. Over residues T177 to Q196 the composition is skewed to acidic residues.

Belongs to the RimP family.

The protein localises to the cytoplasm. Required for maturation of 30S ribosomal subunits. This chain is Ribosome maturation factor RimP, found in Roseobacter denitrificans (strain ATCC 33942 / OCh 114) (Erythrobacter sp. (strain OCh 114)).